The primary structure comprises 533 residues: MRKILPLRAWLAAGLILGSPFSHAASNLVFCSEGSPAGFDPAQYTTGTDYDATSVTLFNRLVQFERGGTRAIPALAESWDIGDDGKTYTFHLRKGVKFHSTDYFKPTREFNADDVLFTFERMLDKNHPFRKAYPTEFPYFTDMGLDKNIARVEKLDEHRVKFTLNEVDAAFIQNLAMDVASIQSAEYAGQLLEAGKPQQINQKPIGTGPFILSRYQKDAQIRFKGNKDYWKPEDVKIDNLIFSINTDAAVRAQKLKAGECQITLNPRPADLKALQEAANLKVPSQPGFNLGYIAYNVTHKPFDQLEVRQALDMAVNKQAIIDAVYQGAGQLAVNGMPPTQWSYDETIKDAPFDPAKARELLKKAGVAEGTEITLWAMPVQRPYNPNAKLMAEMIQADWAKIGIKARIVSYEWGEYIKRAHAGEHDAMLFGWTGDNGDPDNWLATLYGCDSINGNNVSKWCDAAYDKLVKAAKRVSDQDKRSELYKQAQHILKEQVPITPIAHSTVYQPMNKSVHDFKISPFSRNAFYGVTNQP.

The signal sequence occupies residues 1–24; sequence MRKILPLRAWLAAGLILGSPFSHA.

Belongs to the bacterial solute-binding protein 5 family. As to quaternary structure, the complex is composed of two ATP-binding proteins (DppD and DppF), two transmembrane proteins (DppB and DppC) and a solute-binding protein (DppA3). Five orthologous SBPs (DppA1-A5) are present in P.aeruginosa, which increases the substrate specificity of the DppBCDF transporter.

Part of the ABC transporter DppABCDF involved in the uptake of various di/tripeptides. Prefers dipeptides with acidic residues at the C-terminal end. Involved in the uptake of phaseolotoxin, a toxic tripeptide inhibiting the enzyme ornithine carbamoyltransferase. This chain is Di/tripeptide-binding protein 3, found in Pseudomonas aeruginosa (strain UCBPP-PA14).